Reading from the N-terminus, the 304-residue chain is 6-dehydroglucose reductase (304 aa).

Positions 28, 29, and 56 each coordinate NADP(+). Tyr-61 (proton donor) is an active-site residue. 3 residues coordinate D-glucose: Tyr-61, His-133, and Arg-134. The NADP(+) site is built by Ser-163, Asn-164, Gln-185, Ser-215, Leu-217, Gly-219, Gly-268, Ser-269, Gln-270, and Arg-274.

It belongs to the aldo/keto reductase family.

It carries out the reaction D-glucose + NADP(+) = 6-dehydro-D-glucose + NADPH + H(+). In terms of biological role, part of the alkanesulfonate monooxygenase (sulfo-ASMO) pathway, a D-sulfoquinovose degradation pathway that enables the complete utilization of all carbons within sulfoquinovose (SQ) with concomitant production of inorganic sulfite. Catalyzes the NADP-dependent reduction of 6-dehydro-D-glucose to D-glucose. Can also catalyze the reversible reaction, the formation of 6-dehydro-D-glucose from D-glucose in the presence of NADP(+). The sequence is that of 6-dehydroglucose reductase from Novosphingobium aromaticivorans (strain ATCC 700278 / DSM 12444 / CCUG 56034 / CIP 105152 / NBRC 16084 / F199).